Here is a 227-residue protein sequence, read N- to C-terminus: Orotidine 5'-phosphate decarboxylase (227 aa).

Substrate-binding positions include Asp-8, Lys-30, 59–68 (DLKLYDIPNT), Thr-118, Arg-178, Gln-187, Gly-207, and Arg-208. Lys-61 functions as the Proton donor in the catalytic mechanism.

It belongs to the OMP decarboxylase family. Type 1 subfamily. In terms of assembly, homodimer.

It carries out the reaction orotidine 5'-phosphate + H(+) = UMP + CO2. The protein operates within pyrimidine metabolism; UMP biosynthesis via de novo pathway; UMP from orotate: step 2/2. Its function is as follows. Catalyzes the decarboxylation of orotidine 5'-monophosphate (OMP) to uridine 5'-monophosphate (UMP). The sequence is that of Orotidine 5'-phosphate decarboxylase from Nitratiruptor sp. (strain SB155-2).